Here is a 435-residue protein sequence, read N- to C-terminus: MTQEITVIGGGLAGCEAAWQAAKRGVKVRLFEMKPNCYSEAHHLPGLSELVCSNSLRGDSLENAVGLLKEELRRLQSLFMEGAEATKVPAGGALAVDRDLFSQYITSRIESHPLIEVVREEVTRIPEEGIVVLASGPLTSGLLAEEIGRLAGSYLYFYDAIAPIVAADSIDYDKAFRASRYGKGDGDDYLNCPMDEEQYQAFVREIVAAEKVEPKSFEKVVHFEGCMPIEEMASRGPETLRFGPMKPVGLVDPRVGVEPHAVIQLRQENREATMYNLVGFQTKLTWPEQKRIFRMIPGLENAQFLRLGSMHRNTFINAPELLMATCQLKSDQRIFFAGQITGVEGYVESASSGFVAGVNAARLAQGEGLVVPPAETAIGALARHITNTEAGHFQPMNVNYGLFPSLPGRVKKKEKRGLLAQRGLETLEKWLPELS.

9–14 (GGGLAG) is an FAD binding site.

The protein belongs to the MnmG family. TrmFO subfamily. It depends on FAD as a cofactor.

The protein resides in the cytoplasm. It carries out the reaction uridine(54) in tRNA + (6R)-5,10-methylene-5,6,7,8-tetrahydrofolate + NADH + H(+) = 5-methyluridine(54) in tRNA + (6S)-5,6,7,8-tetrahydrofolate + NAD(+). The enzyme catalyses uridine(54) in tRNA + (6R)-5,10-methylene-5,6,7,8-tetrahydrofolate + NADPH + H(+) = 5-methyluridine(54) in tRNA + (6S)-5,6,7,8-tetrahydrofolate + NADP(+). Its function is as follows. Catalyzes the folate-dependent formation of 5-methyl-uridine at position 54 (M-5-U54) in all tRNAs. This chain is Methylenetetrahydrofolate--tRNA-(uracil-5-)-methyltransferase TrmFO, found in Citrifermentans bemidjiense (strain ATCC BAA-1014 / DSM 16622 / JCM 12645 / Bem) (Geobacter bemidjiensis).